Here is a 408-residue protein sequence, read N- to C-terminus: (R)-2-hydroxyisocaproyl-CoA dehydratase alpha subunit (408 aa).

Position 55 (Glu55) interacts with substrate. [4Fe-4S] cluster contacts are provided by Cys84, Cys117, and Cys346.

Belongs to the FldB/FldC dehydratase alpha/beta subunit family. As to quaternary structure, part of the heterodimeric complex HadBC composed of (R)-2-hydroxyisocaproyl-CoA dehydratase alpha (HadB) and beta (HadC) subunit. [4Fe-4S] cluster serves as cofactor.

The catalysed reaction is (R)-2-hydroxy-4-methylpentanoyl-CoA = 4-methylpent-2-enoyl-CoA + H2O. With respect to regulation, activated by HadI. Its function is as follows. Involved in the reductive branch of L-leucine fermentation. Catalyzes the irreversible beta/alpha-elimination of water from (R)-2-hydroxyisocaproyl-CoA to yield isocaprenoyl-CoA. This beta/alpha-dehydration depends on the reductive formation of ketyl radicals on the substrate generated by injection of a single electron from the ATP-dependent activator protein HadI. The enzyme is specific for the R-isomer. This Clostridioides difficile (Peptoclostridium difficile) protein is (R)-2-hydroxyisocaproyl-CoA dehydratase alpha subunit.